The primary structure comprises 238 residues: Probable transcriptional regulatory protein YeeN (238 aa).

This sequence belongs to the TACO1 family. YeeN subfamily.

It is found in the cytoplasm. The sequence is that of Probable transcriptional regulatory protein YeeN from Shigella flexneri.